The following is a 55-amino-acid chain: Large ribosomal subunit protein bL33 (55 aa).

The protein belongs to the bacterial ribosomal protein bL33 family.

The protein is Large ribosomal subunit protein bL33 of Bifidobacterium longum (strain DJO10A).